We begin with the raw amino-acid sequence, 630 residues long: Low affinity heme transporter str3 (630 aa).

Over residues 1–26 the composition is skewed to basic and acidic residues; the sequence is MEAKETHSISDHEVELQDAKPEEKSE. The tract at residues 1–51 is disordered; it reads MEAKETHSISDHEVELQDAKPEEKSENGNFVFEKAFSSDEEKGSGYNTNET. The Cytoplasmic segment spans residues 1 to 79; it reads MEAKETHSIS…VRDSIYQNKR (79 aa). Phosphoserine occurs at positions 10 and 38. Residues 80 to 100 traverse the membrane as a helical segment; the sequence is GMYLAYAFGIAILACSWASAI. The Extracellular portion of the chain corresponds to 101 to 120; that stretch reads QSSTTYSYQVYATASFNRTS. Residues 121–141 form a helical membrane-spanning segment; it reads MISTLEIATAIISSVCKPILG. Residues 142-154 lie on the Cytoplasmic side of the membrane; it reads KFSDITSRPMTYT. Residues 155-175 traverse the membrane as a helical segment; it reads LVLLFYVIGFIVVASSSTISA. Y176 is a topological domain (extracellular). A helical membrane pass occupies residues 177–197; the sequence is VIGSVFISIGSSGLDYLNTLV. Residues 198 to 208 are Cytoplasmic-facing; it reads VGDLTSLKWRG. The chain crosses the membrane as a helical span at residues 209–229; it reads FMTALLSTPYIATVWFTGFIV. Topologically, residues 230-241 are extracellular; it reads QGIIDSNWRWGY. The helical transmembrane segment at 242–262 threads the bilayer; the sequence is GMFAIIMPAVMTPAVIILMYL. The Cytoplasmic portion of the chain corresponds to 263–302; that stretch reads ERQANKDENIKKIINYQTEEKNKNKQSKWQKLWKAVLEVD. Residues 303-323 form a helical membrane-spanning segment; that stretch reads LFGLILLGVGWSILLLPFSLT. The Extracellular segment spans residues 324 to 335; sequence SYAKNGWKNPSM. The helical transmembrane segment at 336–356 threads the bilayer; it reads IAMMVVGGVILIAYSGYEMFI. Over 357–370 the chain is Cytoplasmic; that stretch reads APYPSCPRRVMNRT. A helical transmembrane segment spans residues 371–391; the sequence is FITAVIIDFFYYLAGYLQSMY. The Extracellular portion of the chain corresponds to 392–406; the sequence is FTTYTWILYDWSYRD. The helical transmembrane segment at 407-427 threads the bilayer; the sequence is WTYFNNTMTIALCVFGVFAGA. The Cytoplasmic segment spans residues 428–439; that stretch reads MHRVFHRYKYLQ. Residues 440–460 form a helical membrane-spanning segment; it reads IIGLVIKIVGYGILIRPNFAA. Topologically, residues 461–465 are extracellular; it reads TGKVD. Residues 466–486 traverse the membrane as a helical segment; that stretch reads LAWSLILIGMGGSFSVVGSQV. Residues 487 to 502 lie on the Cytoplasmic side of the membrane; that stretch reads SCQASVPHQDLAIASS. Residues 503–523 form a helical membrane-spanning segment; it reads LLPLYTNIGGAIGAAIASPIF. Positions 522 to 576 are heme binding; it reads IFSNKVPKYLREYLPSSINDTQVYNFYSDSSLIREYPVGTEIRDGAIKAYSRSMF. At 524–574 the chain is on the extracellular side; that stretch reads SNKVPKYLREYLPSSINDTQVYNFYSDSSLIREYPVGTEIRDGAIKAYSRS. Residues 575 to 595 traverse the membrane as a helical segment; sequence MFFLLVPAVSLSFIPLAAAFW. Topologically, residues 596 to 630 are cytoplasmic; the sequence is QSNFYLGNQQNAVEGDQDHKKKGDKETTQEEKIII. A disordered region spans residues 610 to 630; it reads GDQDHKKKGDKETTQEEKIII. The span at 611-630 shows a compositional bias: basic and acidic residues; that stretch reads DQDHKKKGDKETTQEEKIII.

The protein belongs to the major facilitator superfamily.

Its subcellular location is the cell membrane. Functionally, low affinity heme transporter involved in the assimilation of exogenous heme during conditions of low cellular iron. This is Low affinity heme transporter str3 from Schizosaccharomyces pombe (strain 972 / ATCC 24843) (Fission yeast).